Consider the following 754-residue polypeptide: 5-methyltetrahydropteroyltriglutamate--homocysteine methyltransferase (754 aa).

Residues arginine 16–lysine 19 and lysine 114 contribute to the 5-methyltetrahydropteroyltri-L-glutamate site. L-homocysteine-binding positions include isoleucine 430–serine 432 and glutamate 483. Residues isoleucine 430 to serine 432 and glutamate 483 each bind L-methionine. 5-methyltetrahydropteroyltri-L-glutamate contacts are provided by residues arginine 514 to cysteine 515 and tryptophan 560. Aspartate 598 contacts L-homocysteine. An L-methionine-binding site is contributed by aspartate 598. Glutamate 604 is a 5-methyltetrahydropteroyltri-L-glutamate binding site. Zn(2+) contacts are provided by histidine 640, cysteine 642, and glutamate 664. The Proton donor role is filled by histidine 693. Cysteine 725 contributes to the Zn(2+) binding site.

It belongs to the vitamin-B12 independent methionine synthase family. The cofactor is Zn(2+).

The enzyme catalyses 5-methyltetrahydropteroyltri-L-glutamate + L-homocysteine = tetrahydropteroyltri-L-glutamate + L-methionine. It participates in amino-acid biosynthesis; L-methionine biosynthesis via de novo pathway; L-methionine from L-homocysteine (MetE route): step 1/1. Functionally, catalyzes the transfer of a methyl group from 5-methyltetrahydrofolate to homocysteine resulting in methionine formation. The sequence is that of 5-methyltetrahydropteroyltriglutamate--homocysteine methyltransferase from Aeromonas salmonicida (strain A449).